Consider the following 275-residue polypeptide: Exosome complex component Rrp42 (275 aa).

Belongs to the RNase PH family. Rrp42 subfamily. As to quaternary structure, component of the archaeal exosome complex. Forms a hexameric ring-like arrangement composed of 3 Rrp41-Rrp42 heterodimers. The hexameric ring associates with a trimer of Rrp4 and/or Csl4 subunits.

The protein localises to the cytoplasm. Non-catalytic component of the exosome, which is a complex involved in RNA degradation. Contributes to the structuring of the Rrp41 active site. This Saccharolobus solfataricus (strain ATCC 35092 / DSM 1617 / JCM 11322 / P2) (Sulfolobus solfataricus) protein is Exosome complex component Rrp42.